Here is a 428-residue protein sequence, read N- to C-terminus: Trigger factor (428 aa).

Residues Gly163–Pro248 form the PPIase FKBP-type domain.

The protein belongs to the FKBP-type PPIase family. Tig subfamily.

It is found in the cytoplasm. It catalyses the reaction [protein]-peptidylproline (omega=180) = [protein]-peptidylproline (omega=0). Functionally, involved in protein export. Acts as a chaperone by maintaining the newly synthesized protein in an open conformation. Functions as a peptidyl-prolyl cis-trans isomerase. The chain is Trigger factor from Oceanobacillus iheyensis (strain DSM 14371 / CIP 107618 / JCM 11309 / KCTC 3954 / HTE831).